The following is a 68-amino-acid chain: Large ribosomal subunit protein uL29 (68 aa).

Belongs to the universal ribosomal protein uL29 family.

In Streptococcus suis (strain 98HAH33), this protein is Large ribosomal subunit protein uL29.